Reading from the N-terminus, the 248-residue chain is Ribosomal RNA small subunit methyltransferase J (248 aa).

Residues 98-99, 114-115, 150-151, and Asp168 each bind S-adenosyl-L-methionine; these read RD, ER, and SS.

It belongs to the methyltransferase superfamily. RsmJ family.

The protein resides in the cytoplasm. The enzyme catalyses guanosine(1516) in 16S rRNA + S-adenosyl-L-methionine = N(2)-methylguanosine(1516) in 16S rRNA + S-adenosyl-L-homocysteine + H(+). Functionally, specifically methylates the guanosine in position 1516 of 16S rRNA. This is Ribosomal RNA small subunit methyltransferase J from Shewanella baltica (strain OS185).